Reading from the N-terminus, the 595-residue chain is Pentatricopeptide repeat-containing protein At4g21065 (595 aa).

9 PPR repeats span residues 84 to 118 (NVFI…GLVE), 120 to 154 (DTHT…GFGS), 155 to 185 (LIYV…MPEK), 186 to 220 (DLVA…GIKP), 221 to 255 (DGFT…GLTR), 256 to 290 (NLHS…NSVS), 291 to 317 (WTSL…MEST), 323 to 353 (CEIT…MREE), and 359 to 389 (RIEH…MPMQ). The type E motif stretch occupies residues 394 to 469 (IWRTLLGACT…VPGHSLVEVG (76 aa)). Residues 470-500 (NRVHEFLMGDKSHPQSDAIYAKLKEMTGRLR) are type E(+) motif. The tract at residues 501 to 595 (SEGYVPQISN…NGSCSCQDYW (95 aa)) is type DYW motif.

The protein belongs to the PPR family. PCMP-H subfamily.

This chain is Pentatricopeptide repeat-containing protein At4g21065 (PCMP-H28), found in Arabidopsis thaliana (Mouse-ear cress).